Consider the following 372-residue polypeptide: Phospho-N-acetylmuramoyl-pentapeptide-transferase (372 aa).

The next 10 helical transmembrane spans lie at 25–45 (RSLL…PIMI), 73–93 (TMGG…WADL), 98–118 (VWIV…DDWI), 134–154 (FFWT…IATQ), 176–196 (SIPL…YLVI), 211–231 (GLAI…AYLS), 251–271 (LVVI…YNAH), 275–295 (VFMG…IAVM), 300–320 (IVFA…FLQI), and 349–369 (QVVI…LMTL).

The protein belongs to the glycosyltransferase 4 family. MraY subfamily. It depends on Mg(2+) as a cofactor.

The protein localises to the cell inner membrane. It catalyses the reaction UDP-N-acetyl-alpha-D-muramoyl-L-alanyl-gamma-D-glutamyl-meso-2,6-diaminopimeloyl-D-alanyl-D-alanine + di-trans,octa-cis-undecaprenyl phosphate = di-trans,octa-cis-undecaprenyl diphospho-N-acetyl-alpha-D-muramoyl-L-alanyl-D-glutamyl-meso-2,6-diaminopimeloyl-D-alanyl-D-alanine + UMP. Its pathway is cell wall biogenesis; peptidoglycan biosynthesis. In terms of biological role, catalyzes the initial step of the lipid cycle reactions in the biosynthesis of the cell wall peptidoglycan: transfers peptidoglycan precursor phospho-MurNAc-pentapeptide from UDP-MurNAc-pentapeptide onto the lipid carrier undecaprenyl phosphate, yielding undecaprenyl-pyrophosphoryl-MurNAc-pentapeptide, known as lipid I. The polypeptide is Phospho-N-acetylmuramoyl-pentapeptide-transferase (Acinetobacter baumannii (strain AB0057)).